The chain runs to 301 residues: Probable alpha-L-glutamate ligase (301 aa).

An ATP-grasp domain is found at Leu-104–Glu-287. Residues Lys-141, Glu-178–Tyr-179, Asp-187, and Arg-211–Asn-213 each bind ATP. Residues Asp-248, Glu-260, and Asn-262 each coordinate Mg(2+). Residues Asp-248, Glu-260, and Asn-262 each coordinate Mn(2+).

This sequence belongs to the RimK family. Mg(2+) serves as cofactor. It depends on Mn(2+) as a cofactor.

The protein is Probable alpha-L-glutamate ligase of Pseudomonas fluorescens (strain ATCC BAA-477 / NRRL B-23932 / Pf-5).